A 490-amino-acid polypeptide reads, in one-letter code: Ribosomal L1 domain-containing protein 1 (490 aa).

An N-acetylmethionine modification is found at Met1. The span at 1 to 27 (MEDSASASLSSAAATGTSTSTPAAPTA) shows a compositional bias: low complexity. The disordered stretch occupies residues 1–33 (MEDSASASLSSAAATGTSTSTPAAPTARKQLDK). Residues Lys120 and Lys254 each participate in a glycyl lysine isopeptide (Lys-Gly) (interchain with G-Cter in SUMO2) cross-link. Over residues 280-293 (LNKKKKEARRKRRE) the composition is skewed to basic residues. Residues 280 to 313 (LNKKKKEARRKRRERNFEKQKERKKKRQQARKTA) are a coiled coil. The segment at 280–490 (LNKKKKEARR…PKKPKVPQST (211 aa)) is disordered. The span at 329–343 (TVKKPESKKEQTPEH) shows a compositional bias: basic and acidic residues. Thr340 is subject to Phosphothreonine. A compositionally biased stretch (basic residues) spans 344-353 (GKKKRGRGKA). Residue Thr358 is modified to Phosphothreonine. Ser361 is modified (phosphoserine). At Thr375 the chain carries Phosphothreonine. Positions 376–385 (PANEKVEIQK) are enriched in basic and acidic residues. A Glycyl lysine isopeptide (Lys-Gly) (interchain with G-Cter in SUMO2) cross-link involves residue Lys380. A phosphoserine mark is found at Ser392 and Ser396. Residues Thr415 and Thr423 each carry the phosphothreonine modification. The residue at position 427 (Ser427) is a Phosphoserine. The segment covering 427 to 460 (SPEKKPKIKEEAVKEKSPSLGKKDARQTPKKPEA) has biased composition (basic and acidic residues). Residue Lys435 forms a Glycyl lysine isopeptide (Lys-Gly) (interchain with G-Cter in SUMO2) linkage. At Ser443 the chain carries Phosphoserine. Lys461 participates in a covalent cross-link: Glycyl lysine isopeptide (Lys-Gly) (interchain with G-Cter in SUMO2). Thr465 is subject to Phosphothreonine. Lys468 carries the N6-acetyllysine modification. Ser469 carries the phosphoserine modification. A compositionally biased stretch (basic residues) spans 469–490 (SVRKASHTPKKWPKKPKVPQST).

This sequence belongs to the universal ribosomal protein uL1 family. Highly divergent. In terms of assembly, interacts with ING1 (isoform 2). Interacts with KPNA7 and KPNA2. In terms of tissue distribution, expressed at high intensities in the heart, skeletal muscle, and placenta.

It localises to the nucleus. It is found in the nucleolus. Its function is as follows. Regulates cellular senescence through inhibition of PTEN translation. Acts as a pro-apoptotic regulator in response to DNA damage. The protein is Ribosomal L1 domain-containing protein 1 (RSL1D1) of Homo sapiens (Human).